Reading from the N-terminus, the 343-residue chain is 3-dehydroquinate synthase (343 aa).

NAD(+) contacts are provided by residues 61–66, 95–99, 119–120, K132, K141, and 159–162; these read SGEKYK, GVISD, TT, and FLKT. Zn(2+) is bound by residues E174, H231, and H248.

Belongs to the sugar phosphate cyclases superfamily. Dehydroquinate synthase family. Co(2+) serves as cofactor. It depends on Zn(2+) as a cofactor. NAD(+) is required as a cofactor.

It is found in the cytoplasm. It carries out the reaction 7-phospho-2-dehydro-3-deoxy-D-arabino-heptonate = 3-dehydroquinate + phosphate. The protein operates within metabolic intermediate biosynthesis; chorismate biosynthesis; chorismate from D-erythrose 4-phosphate and phosphoenolpyruvate: step 2/7. Its function is as follows. Catalyzes the conversion of 3-deoxy-D-arabino-heptulosonate 7-phosphate (DAHP) to dehydroquinate (DHQ). The protein is 3-dehydroquinate synthase of Helicobacter pylori (strain G27).